The primary structure comprises 1164 residues: DNA-directed RNA polymerase 133 kDa polypeptide (1164 aa).

This sequence belongs to the RNA polymerase beta chain family. In terms of assembly, the DNA-dependent RNA polymerase used for intermediate and late genes expression consists of eight subunits 147 kDa, 133 kDa, 35 kDa, 30 kDa, 22 kDa, 19 kDa, 18 kDa and 7 kDa totalling more than 500 kDa in mass. The same holoenzyme, with the addition of the transcription-specificity factor RAP94, is used for early gene expression.

It localises to the virion. The enzyme catalyses RNA(n) + a ribonucleoside 5'-triphosphate = RNA(n+1) + diphosphate. Part of the DNA-dependent RNA polymerase which catalyzes the transcription of viral DNA into RNA using the four ribonucleoside triphosphates as substrates. Responsible for the transcription of early, intermediate and late genes. DNA-dependent RNA polymerase associates with the early transcription factor (ETF), itself composed of OPG118 and OPG133, thereby allowing the early genes transcription. Late transcription, and probably also intermediate transcription, require newly synthesized RNA polymerase. In Homo sapiens (Human), this protein is DNA-directed RNA polymerase 133 kDa polypeptide (OPG151).